The following is a 125-amino-acid chain: Large ribosomal subunit protein bL12 (125 aa).

It belongs to the bacterial ribosomal protein bL12 family. As to quaternary structure, homodimer. Part of the ribosomal stalk of the 50S ribosomal subunit. Forms a multimeric L10(L12)X complex, where L10 forms an elongated spine to which 2 to 4 L12 dimers bind in a sequential fashion. Binds GTP-bound translation factors.

In terms of biological role, forms part of the ribosomal stalk which helps the ribosome interact with GTP-bound translation factors. Is thus essential for accurate translation. The sequence is that of Large ribosomal subunit protein bL12 from Campylobacter curvus (strain 525.92).